A 140-amino-acid polypeptide reads, in one-letter code: Nucleoside diphosphate kinase (140 aa).

Positions 11, 59, 87, 93, 104, and 114 each coordinate ATP. The active-site Pros-phosphohistidine intermediate is the histidine 117.

Belongs to the NDK family. As to quaternary structure, homotetramer. Mg(2+) serves as cofactor.

It localises to the cytoplasm. It carries out the reaction a 2'-deoxyribonucleoside 5'-diphosphate + ATP = a 2'-deoxyribonucleoside 5'-triphosphate + ADP. The enzyme catalyses a ribonucleoside 5'-diphosphate + ATP = a ribonucleoside 5'-triphosphate + ADP. Major role in the synthesis of nucleoside triphosphates other than ATP. The ATP gamma phosphate is transferred to the NDP beta phosphate via a ping-pong mechanism, using a phosphorylated active-site intermediate. This is Nucleoside diphosphate kinase from Gluconacetobacter diazotrophicus (strain ATCC 49037 / DSM 5601 / CCUG 37298 / CIP 103539 / LMG 7603 / PAl5).